A 339-amino-acid polypeptide reads, in one-letter code: Glycerol-3-phosphate dehydrogenase [NAD(P)+] (339 aa).

Positions 13, 14, and 108 each coordinate NADPH. Positions 108, 139, and 141 each coordinate sn-glycerol 3-phosphate. Alanine 143 contributes to the NADPH binding site. Residues lysine 194, aspartate 247, serine 257, arginine 258, and asparagine 259 each contribute to the sn-glycerol 3-phosphate site. Residue lysine 194 is the Proton acceptor of the active site. Arginine 258 lines the NADPH pocket. Residues valine 282 and glutamate 284 each coordinate NADPH.

Belongs to the NAD-dependent glycerol-3-phosphate dehydrogenase family.

The protein resides in the cytoplasm. The enzyme catalyses sn-glycerol 3-phosphate + NAD(+) = dihydroxyacetone phosphate + NADH + H(+). It carries out the reaction sn-glycerol 3-phosphate + NADP(+) = dihydroxyacetone phosphate + NADPH + H(+). It functions in the pathway membrane lipid metabolism; glycerophospholipid metabolism. Its function is as follows. Catalyzes the reduction of the glycolytic intermediate dihydroxyacetone phosphate (DHAP) to sn-glycerol 3-phosphate (G3P), the key precursor for phospholipid synthesis. This Streptococcus mutans serotype c (strain ATCC 700610 / UA159) protein is Glycerol-3-phosphate dehydrogenase [NAD(P)+].